The following is a 514-amino-acid chain: Probable lipid II flippase MurJ (514 aa).

The next 14 membrane-spanning stretches (helical) occupy residues 3-23, 25-45, 92-112, 130-150, 157-177, 186-206, 245-265, 271-291, 315-335, 354-374, 386-406, 409-429, 448-468, and 481-501; these read ILKS…FGFF, DVLI…FIAF, ILVL…IIFI, LLKI…CSSI, FFIP…FSFF, IISL…YQFP, ISLI…ISWI, LIEF…FTSF, LILS…LVII, LELY…VSAF, ISIL…FYFQ, GLAL…YWKL, LLIA…FIPS, and LFTI…FLGI.

This sequence belongs to the MurJ/MviN family.

It localises to the cell inner membrane. It functions in the pathway cell wall biogenesis; peptidoglycan biosynthesis. Involved in peptidoglycan biosynthesis. Transports lipid-linked peptidoglycan precursors from the inner to the outer leaflet of the cytoplasmic membrane. This Buchnera aphidicola subsp. Schizaphis graminum (strain Sg) protein is Probable lipid II flippase MurJ.